A 1363-amino-acid polypeptide reads, in one-letter code: MLSFVDTRILLLLAVTSYLATSQHLFQASAGRKGPRGDKGPQGERGPPGPPGRDGEDGPPGPPGPPGPPGLGGNFAAQYDPSKAADFGPGPMGLMGPRGPPGASGPPGPPGFQGVPGEPGEPGQTGPQGPRGPPGPPGKAGEDGHPGKPGRPGERGVAGPQGARGFPGTPGLPGFKGIRGHNGLDGQKGQPGTPGTKGEPGAPGENGTPGQPGARGLPGERGRIGAPGPAGARGSDGSAGPTGPAGPIGAAGPPGFPGAPGAKGEIGPAGNVGPTGPAGPRGEIGLPGSSGPVGPPGNPGANGLPGAKGAAGLPGVAGAPGLPGPRGIPGPPGPAGPSGARGLVGEPGPAGAKGESGNKGEPGAAGPPGPPGPSGEEGKRGSNGEPGSAGPPGPAGLRGVPGSRGLPGADGRAGVMGPAGNRGASGPVGAKGPNGDAGRPGEPGLMGPRGLPGQPGSPGPAGKEGPVGFPGADGRVGPIGPAGNRGEPGNIGFPGPKGPTGEPGKPGEKGNVGLAGPRGAPGPEGNNGAQGPPGVTGNQGAKGETGPAGPPGFQGLPGPSGPAGEAGKPGERGLHGEFGVPGPAGPRGERGLPGESGAVGPAGPIGSRGPSGPPGPDGNKGEPGNVGPAGAPGPAGPGGIPGERGVAGVPGGKGEKGAPGLRGDTGATGRDGARGLPGAIGAPGPAGGAGDRGEGGPAGPAGPAGARGIPGERGEPGPVGPSGFAGPPGAAGQPGAKGERGPKGPKGETGPTGAIGPIGASGPPGPVGAAGPAGPRGDAGPPGMTGFPGAAGRVGPPGPAGITGPPGPPGPAGKDGPRGLRGDVGPVGRTGEQGIAGPPGFAGEKGPSGEAGAAGPPGTPGPQGILGAPGILGLPGSRGERGLPGIAGATGEPGPLGVSGPPGARGPSGPVGSPGPNGAPGEAGRDGNPGNDGPPGRDGAPGFKGERGAPGNPGPSGALGAPGPHGQVGPSGKPGNRGDPGPVGPVGPAGAFGPRGLAGPQGPRGEKGEPGDKGHRGLPGLKGHNGLQGLPGLAGQHGDQGPPGNNGPAGPRGPPGPSGPPGKDGRNGLPGPIGPAGVRGSHGSQGPAGPPGPPGPPGPPGPNGGGYEVGFDAEYYRADQPSLRPKDYEVDATLKTLNNQIETLLTPEGSKKNPARTCRDLRLSHPEWSSGFYWIDPNQGCTADAIRAYCDFATGETCIHASLEDIPTKTWYVSKNPKDKKHIWFGETINGGTQFEYNGEGVTTKDMATQLAFMRLLANHASQNITYHCKNSIAYMDEETGNLKKAVILQGSNDVELRAEGNSRFTFSVLVDGCSKKNNKWGKTIIEYRTNKPSRLPILDIAPLDIGGADQEFGLHIGPVCFK.

Positions 1–22 (MLSFVDTRILLLLAVTSYLATS) are cleaved as a signal peptide. A Pyrrolidone carboxylic acid modification is found at Gln-23. Positions 23 to 77 (QHLFQASAGRKGPRGDKGPQGERGPPGPPGRDGEDGPPGPPGPPGPPGLGGNFAA) are cleaved as a propeptide — N-terminal propeptide. Positions 28–1110 (ASAGRKGPRG…GPNGGGYEVG (1083 aa)) are disordered. The segment covering 59–69 (PPGPPGPPGPP) has biased composition (pro residues). Gln-78 bears the Pyrrolidone carboxylic acid mark. At Lys-83 the chain carries Allysine. Positions 88–97 (GPGPMGLMGP) are enriched in low complexity. The span at 98-110 (RGPPGASGPPGPP) shows a compositional bias: pro residues. The span at 112-128 (FQGVPGEPGEPGQTGPQ) shows a compositional bias: low complexity. A compositionally biased stretch (basic and acidic residues) spans 140-154 (AGEDGHPGKPGRPGE). The residue at position 176 (Lys-176) is a 5-hydroxylysine; alternate. Lys-176 carries an O-linked (Gal...) hydroxylysine; alternate glycan. 2 stretches are compositionally biased toward low complexity: residues 224–263 (IGAP…PGAK) and 299–320 (PGAN…AGAP). Pro residues predominate over residues 322–335 (LPGPRGIPGPPGPA). 4-hydroxyproline occurs at positions 440 and 443. 2 stretches are compositionally biased toward low complexity: residues 601-610 (PAGPIGSRGP) and 674-683 (RGLPGAIGAP). Residues 684 to 699 (GPAGGAGDRGEGGPAG) are compositionally biased toward gly residues. Low complexity predominate over residues 721–736 (PSGFAGPPGAAGQPGA). Positions 737–746 (KGERGPKGPK) are enriched in basic and acidic residues. Low complexity-rich tracts occupy residues 748-794 (ETGP…AGRV), 842-875 (AGEK…LGLP), 898-931 (VSGP…NPGN), 955-965 (PSGALGAPGPH), and 986-995 (VGPAGAFGPR). The segment covering 1004 to 1015 (RGEKGEPGDKGH) has biased composition (basic and acidic residues). A compositionally biased stretch (low complexity) spans 1036-1049 (QHGDQGPPGNNGPA). Pro residues-rich tracts occupy residues 1051-1060 (PRGPPGPSGP) and 1088-1102 (AGPP…PPGP). Positions 1118–1363 (ADQPSLRPKD…GLHIGPVCFK (246 aa)) are cleaved as a propeptide — C-terminal propeptide. A Fibrillar collagen NC1 domain is found at 1128–1363 (YEVDATLKTL…GLHIGPVCFK (236 aa)). Intrachain disulfides connect Cys-1158-Cys-1190, Cys-1198-Cys-1361, and Cys-1269-Cys-1314. 5 residues coordinate Ca(2+): Asp-1176, Asn-1178, Gln-1179, Cys-1181, and Asp-1184. Asn-1264 carries N-linked (GlcNAc...) asparagine glycosylation.

It belongs to the fibrillar collagen family. As to quaternary structure, trimers of one alpha 2(I) and two alpha 1(I) chains. Prolines at the third position of the tripeptide repeating unit (G-X-Y) are hydroxylated in some or all of the chains. Post-translationally, the N-terminus of the mature protein is blocked. Forms the fibrils of tendon, ligaments and bones. In bones the fibrils are mineralized with calcium hydroxyapatite.

It localises to the secreted. Its subcellular location is the extracellular space. The protein resides in the extracellular matrix. Functionally, type I collagen is a member of group I collagen (fibrillar forming collagen). This is Collagen alpha-2(I) chain (COL1A2) from Gallus gallus (Chicken).